The following is a 99-amino-acid chain: Aspartyl/glutamyl-tRNA(Asn/Gln) amidotransferase subunit C (99 aa).

This sequence belongs to the GatC family. In terms of assembly, heterotrimer of A, B and C subunits.

It catalyses the reaction L-glutamyl-tRNA(Gln) + L-glutamine + ATP + H2O = L-glutaminyl-tRNA(Gln) + L-glutamate + ADP + phosphate + H(+). The catalysed reaction is L-aspartyl-tRNA(Asn) + L-glutamine + ATP + H2O = L-asparaginyl-tRNA(Asn) + L-glutamate + ADP + phosphate + 2 H(+). Its function is as follows. Allows the formation of correctly charged Asn-tRNA(Asn) or Gln-tRNA(Gln) through the transamidation of misacylated Asp-tRNA(Asn) or Glu-tRNA(Gln) in organisms which lack either or both of asparaginyl-tRNA or glutaminyl-tRNA synthetases. The reaction takes place in the presence of glutamine and ATP through an activated phospho-Asp-tRNA(Asn) or phospho-Glu-tRNA(Gln). The sequence is that of Aspartyl/glutamyl-tRNA(Asn/Gln) amidotransferase subunit C from Thermobifida fusca (strain YX).